Here is a 240-residue protein sequence, read N- to C-terminus: Nicotinamide riboside kinase (240 aa).

13–21 (GCSSSGKTT) lines the ATP pocket. Mg(2+) is bound by residues T20 and D39. D39 serves as the catalytic Proton acceptor. Residues 39-42 (DDFY) and 59-60 (WD) each bind substrate. Residue R158 participates in ATP binding. Substrate contacts are provided by residues R159 and 164–165 (GY). ATP is bound by residues 162–164 (RKG) and 208–210 (KSK).

It belongs to the uridine kinase family. NRK subfamily.

It catalyses the reaction beta-nicotinamide D-riboside + ATP = beta-nicotinamide D-ribonucleotide + ADP + H(+). The enzyme catalyses beta-D-ribosylnicotinate + ATP = nicotinate beta-D-ribonucleotide + ADP + H(+). It functions in the pathway cofactor biosynthesis; NAD(+) biosynthesis. Functionally, catalyzes the phosphorylation of nicotinamide riboside (NR) and nicotinic acid riboside (NaR) to form nicotinamide mononucleotide (NMN) and nicotinic acid mononucleotide (NaMN). This Saccharomyces cerevisiae (strain ATCC 204508 / S288c) (Baker's yeast) protein is Nicotinamide riboside kinase (NRK1).